A 97-amino-acid polypeptide reads, in one-letter code: uncharacterized protein (97 aa).

The segment covering 1–24 (MTQKNGADRPDDYKRFSSLDKEYD) has biased composition (basic and acidic residues). Positions 1–97 (MTQKNGADRP…FEGTIDQNLD (97 aa)) are disordered. Positions 31–43 (SNTETESVNTETQ) are enriched in low complexity. The segment covering 44-53 (THNKENKNDT) has biased composition (basic and acidic residues).

This is an uncharacterized protein from Bacillus subtilis (strain 168).